Reading from the N-terminus, the 244-residue chain is Uridylate kinase (244 aa).

15–18 (KLSG) lines the ATP pocket. Positions 23–28 (GSEGFG) are involved in allosteric activation by GTP. Gly57 contributes to the UMP binding site. Residues Gly58 and Arg62 each contribute to the ATP site. Residues Asp77 and 138-145 (TGNPFFTT) each bind UMP. 3 residues coordinate ATP: Thr165, Phe171, and Asp174.

The protein belongs to the UMP kinase family. In terms of assembly, homohexamer.

Its subcellular location is the cytoplasm. The catalysed reaction is UMP + ATP = UDP + ADP. It functions in the pathway pyrimidine metabolism; CTP biosynthesis via de novo pathway; UDP from UMP (UMPK route): step 1/1. Allosterically activated by GTP. Inhibited by UTP. Functionally, catalyzes the reversible phosphorylation of UMP to UDP. The polypeptide is Uridylate kinase (Aeromonas hydrophila subsp. hydrophila (strain ATCC 7966 / DSM 30187 / BCRC 13018 / CCUG 14551 / JCM 1027 / KCTC 2358 / NCIMB 9240 / NCTC 8049)).